The chain runs to 112 residues: Nucleoid-associated protein Pfl01_1806 (112 aa).

The protein belongs to the YbaB/EbfC family. Homodimer.

The protein localises to the cytoplasm. It localises to the nucleoid. In terms of biological role, binds to DNA and alters its conformation. May be involved in regulation of gene expression, nucleoid organization and DNA protection. This Pseudomonas fluorescens (strain Pf0-1) protein is Nucleoid-associated protein Pfl01_1806.